The primary structure comprises 358 residues: Cyanide hydratase (358 aa).

Positions 8–287 (YKAAAVNAEP…QGLLFVDIDL (280 aa)) constitute a CN hydrolase domain. Catalysis depends on Glu-48, which acts as the Proton acceptor. The active site involves Lys-130. Cys-165 functions as the Nucleophile in the catalytic mechanism.

The protein belongs to the carbon-nitrogen hydrolase superfamily. Nitrilase family. In terms of assembly, oligomer of dimers, forming left-handed helical fibers.

It carries out the reaction formamide = hydrogen cyanide + H2O. Catalyzes the hydration of cyanide to formamide. Degradation of cyanide may be important for plant pathogenic fungi in infection of cyanogenic plants. This is Cyanide hydratase from Penicillium rubens (strain ATCC 28089 / DSM 1075 / NRRL 1951 / Wisconsin 54-1255) (Penicillium chrysogenum).